A 127-amino-acid polypeptide reads, in one-letter code: Small ribosomal subunit protein uS11 (127 aa).

The protein belongs to the universal ribosomal protein uS11 family. Part of the 30S ribosomal subunit. Interacts with proteins S7 and S18. Binds to IF-3.

Functionally, located on the platform of the 30S subunit, it bridges several disparate RNA helices of the 16S rRNA. Forms part of the Shine-Dalgarno cleft in the 70S ribosome. The chain is Small ribosomal subunit protein uS11 from Chlorobium chlorochromatii (strain CaD3).